The sequence spans 265 residues: 4-hydroxy-tetrahydrodipicolinate reductase (265 aa).

Residues 7–12 (GASGRM) and Asp33 each bind NAD(+). Arg34 contributes to the NADP(+) binding site. Residues 96-98 (GTT) and 120-123 (AANM) each bind NAD(+). His153 acts as the Proton donor/acceptor in catalysis. His154 contacts (S)-2,3,4,5-tetrahydrodipicolinate. The active-site Proton donor is the Lys157. A (S)-2,3,4,5-tetrahydrodipicolinate-binding site is contributed by 163–164 (GT).

Belongs to the DapB family.

It is found in the cytoplasm. The catalysed reaction is (S)-2,3,4,5-tetrahydrodipicolinate + NAD(+) + H2O = (2S,4S)-4-hydroxy-2,3,4,5-tetrahydrodipicolinate + NADH + H(+). It catalyses the reaction (S)-2,3,4,5-tetrahydrodipicolinate + NADP(+) + H2O = (2S,4S)-4-hydroxy-2,3,4,5-tetrahydrodipicolinate + NADPH + H(+). Its pathway is amino-acid biosynthesis; L-lysine biosynthesis via DAP pathway; (S)-tetrahydrodipicolinate from L-aspartate: step 4/4. In terms of biological role, catalyzes the conversion of 4-hydroxy-tetrahydrodipicolinate (HTPA) to tetrahydrodipicolinate. The chain is 4-hydroxy-tetrahydrodipicolinate reductase from Burkholderia ambifaria (strain MC40-6).